An 849-amino-acid polypeptide reads, in one-letter code: DNA mismatch repair protein MutS (849 aa).

ATP is bound at residue 602 to 609; it reads GPNMSGKS.

The protein belongs to the DNA mismatch repair MutS family.

Functionally, this protein is involved in the repair of mismatches in DNA. It is possible that it carries out the mismatch recognition step. This protein has a weak ATPase activity. This Streptococcus mutans serotype c (strain ATCC 700610 / UA159) protein is DNA mismatch repair protein MutS.